A 503-amino-acid chain; its full sequence is Transforming protein rel polyprotein (503 aa).

The RHD domain maps to 16–305 (PYIEIFEQPR…GNKAKRQRST (290 aa)). S275 carries the phosphoserine; by host PKA modification. Disordered regions lie at residues 286–306 (RYLP…RSTL) and 318–342 (AVTE…KEPN). A Nuclear localization signal motif is present at residues 298–303 (KAKRQR).

Its subcellular location is the host cytoplasm. Functionally, this transforming protein appears to have a protein-kinase activity. The sequence is that of Transforming protein rel polyprotein (V-REL) from Galliformes.